Reading from the N-terminus, the 290-residue chain is Probable aquaporin PIP2-7 (290 aa).

The next 2 helical transmembrane spans lie at 45–65 and 79–99; these read ALIA…ATVI and GVGY…LVYC. Positions 109 to 111 match the NPA 1 motif; it reads NPA. Transmembrane regions (helical) follow at residues 128-148, 168-188, and 202-222; these read VLYV…VKGI, SAAG…YTVF, and IPVL…LATI. The NPA 2 motif lies at 230–232; that stretch reads NPA. A helical membrane pass occupies residues 252-272; it reads IFWVGPVIGAFLAAAYHKLVL.

It belongs to the MIP/aquaporin (TC 1.A.8) family. PIP (TC 1.A.8.11) subfamily. As to expression, expressed in roots.

Its subcellular location is the cell membrane. Functionally, aquaporins facilitate the transport of water and small neutral solutes across cell membranes. The chain is Probable aquaporin PIP2-7 (PIP2-7) from Oryza sativa subsp. japonica (Rice).